Here is a 303-residue protein sequence, read N- to C-terminus: Recombination-associated protein RdgC (303 aa).

This sequence belongs to the RdgC family.

The protein localises to the cytoplasm. It is found in the nucleoid. In terms of biological role, may be involved in recombination. The sequence is that of Recombination-associated protein RdgC from Shewanella loihica (strain ATCC BAA-1088 / PV-4).